Reading from the N-terminus, the 192-residue chain is Molybdenum cofactor cytidylyltransferase (192 aa).

Aspartate 101 is a Mg(2+) binding site.

In terms of assembly, monomer. Interacts with the Moco-binding chaperone PaoD. It depends on Mg(2+) as a cofactor. Mn(2+) serves as cofactor.

It catalyses the reaction Mo-molybdopterin + CTP + H(+) = Mo-molybdopterin cytosine dinucleotide + diphosphate. Its function is as follows. Transfers a CMP moiety from CTP to Mo-molybdopterin (Mo-MPT) cofactor (Moco or molybdenum cofactor) to form Mo-molybdopterin cytosine dinucleotide (Mo-MCD) cofactor. Is specific for CTP; other nucleotides such as ATP and GTP cannot be utilized. Is also able to convert MPT to MCD in the absence of molybdate, however, with only one catalytic turnover. This Escherichia coli (strain K12) protein is Molybdenum cofactor cytidylyltransferase (mocA).